A 358-amino-acid chain; its full sequence is Putative myc-like protein MYCLP1 (358 aa).

Disordered regions lie at residues 150 to 171 (ACSR…TVKK) and 219 to 245 (QEGA…DKED). Residues 227–242 (PPKEALEREAPGGKDD) are compositionally biased toward basic and acidic residues. Residues 274 to 326 (WTKKKYHSYLERKRRNDQRSRFLALRDEVPALASCSRVSKVMILVKATEYLHE) form the bHLH domain.

In terms of assembly, efficient DNA binding requires dimerization with another bHLH protein. Binds DNA as a heterodimer with MAX. Detected in adult testis.

The protein resides in the nucleus. This Homo sapiens (Human) protein is Putative myc-like protein MYCLP1 (MYCLP1).